The sequence spans 301 residues: CRISPR-associated endonuclease Cas1 (301 aa).

The Mn(2+) site is built by Glu-133, His-200, and Asp-213.

It belongs to the CRISPR-associated endonuclease Cas1 family. As to quaternary structure, homodimer, forms a heterotetramer with a Cas2 homodimer. Mg(2+) serves as cofactor. The cofactor is Mn(2+).

Its function is as follows. CRISPR (clustered regularly interspaced short palindromic repeat), is an adaptive immune system that provides protection against mobile genetic elements (viruses, transposable elements and conjugative plasmids). CRISPR clusters contain spacers, sequences complementary to antecedent mobile elements, and target invading nucleic acids. CRISPR clusters are transcribed and processed into CRISPR RNA (crRNA). Acts as a dsDNA endonuclease. Involved in the integration of spacer DNA into the CRISPR cassette. The polypeptide is CRISPR-associated endonuclease Cas1 (Clostridium sp. (strain SY8519)).